A 181-amino-acid chain; its full sequence is Beta-lactoglobulin-2 (181 aa).

The first 18 residues, Met-1–Ala-18, serve as a signal peptide directing secretion. Intrachain disulfides connect Cys-84-Cys-179 and Cys-124-Cys-138.

Belongs to the calycin superfamily. Lipocalin family. Monomer.

The protein resides in the secreted. Lactoglobulin is the primary component of whey, it binds retinol and is probably involved in the transport of that molecule. This is Beta-lactoglobulin-2 (LGB2) from Equus caballus (Horse).